We begin with the raw amino-acid sequence, 387 residues long: Protein MGF 360-4L (387 aa).

The protein belongs to the asfivirus MGF 360 family.

Its function is as follows. Plays a role in virus cell tropism, and may be required for efficient virus replication in macrophages. The polypeptide is Protein MGF 360-4L (Ornithodoros (relapsing fever ticks)).